We begin with the raw amino-acid sequence, 179 residues long: Large ribosomal subunit protein uL5 (179 aa).

Belongs to the universal ribosomal protein uL5 family. Part of the 50S ribosomal subunit; part of the 5S rRNA/L5/L18/L25 subcomplex. Contacts the 5S rRNA and the P site tRNA. Forms a bridge to the 30S subunit in the 70S ribosome.

Its function is as follows. This is one of the proteins that bind and probably mediate the attachment of the 5S RNA into the large ribosomal subunit, where it forms part of the central protuberance. In the 70S ribosome it contacts protein S13 of the 30S subunit (bridge B1b), connecting the 2 subunits; this bridge is implicated in subunit movement. Contacts the P site tRNA; the 5S rRNA and some of its associated proteins might help stabilize positioning of ribosome-bound tRNAs. The protein is Large ribosomal subunit protein uL5 of Prochlorococcus marinus (strain NATL2A).